Consider the following 301-residue polypeptide: Phosducin-like protein (301 aa).

Position 2 is an N-acetylthreonine (Thr-2). The disordered stretch occupies residues 15-53 (YYYSSSEEEDSDHEDKDRGRGALAGSSMPADADLAGEGI). Ser-20, Ser-25, Ser-226, Ser-293, and Ser-296 each carry phosphoserine. The Phosducin domain occupies 37 to 299 (LAGSSMPADA…TCHSEDSDLE (263 aa)). The thioredoxin fold stretch occupies residues 158–301 (FKQVFEIPSG…HSEDSDLEID (144 aa)).

The protein belongs to the phosducin family. As to quaternary structure, forms a complex with the beta and gamma subunits of the GTP-binding protein, transducin. Interacts with the CCT chaperonin complex.

It is found in the cell projection. The protein resides in the cilium. Functions as a co-chaperone for CCT in the assembly of heterotrimeric G protein complexes, facilitates the assembly of both Gbeta-Ggamma and RGS-Gbeta5 heterodimers. Also acts as a positive regulator of hedgehog signaling and regulates ciliary function. The chain is Phosducin-like protein (PDCL) from Bos taurus (Bovine).